The chain runs to 953 residues: Ribonuclease E (953 aa).

Disordered stretches follow at residues 1-23 (MIDG…PDRL) and 118-314 (VAPQ…RRRP). Basic and acidic residues predominate over residues 14–23 (SQHEELPDRL). Residues 127–150 (LADDEDVDDGPDYVADDSDADDEG) show a composition bias toward acidic residues. Residues 157–169 (NRRRRRGRRGRGR) show a composition bias toward basic residues. The segment covering 183-193 (DQQSEPRAQQF) has biased composition (polar residues). Positions 199-223 (AETDDGDDRDSEDTEAGDNGEDENG) are enriched in acidic residues. Residues 230-240 (RRRRRRRRRKS) are compositionally biased toward basic residues. Basic and acidic residues-rich tracts occupy residues 263-272 (VHERVPRAGD) and 294-311 (TRLE…DAGR). In terms of domain architecture, S1 motif spans 376-453 (GNIYLGIVQN…GHKGARLTTQ (78 aa)). Positions 647 and 691 each coordinate Mg(2+). The Zn(2+) site is built by Cys-749 and Cys-752. Disordered stretches follow at residues 766–808 (SAAA…APGE) and 822–953 (LAGR…IRLD). Positions 848 to 915 (DLDDTAQADF…DADVDEEDAA (68 aa)) are enriched in acidic residues.

It belongs to the RNase E/G family. In terms of assembly, assembles into a homotetramer formed by a dimer of dimers. Interacts with DNA-binding protein HU (hupB). Requires Mg(2+) as cofactor. It depends on Zn(2+) as a cofactor.

Its subcellular location is the cytoplasm. The catalysed reaction is Endonucleolytic cleavage of single-stranded RNA in A- and U-rich regions.. Functionally, endoribonuclease that plays a central role in RNA processing and decay. Plays a major role in pre-16S rRNA maturation, probably generating the mature 5'-end, and a minor role in pre-5S and pre-23S rRNA maturation. Probably also processes tRNA. RNase E and HupB jointly contribute to cellular adaptation to changing growth conditions and survival during antibiotic treatment and in the host. The polypeptide is Ribonuclease E (Mycobacterium tuberculosis (strain ATCC 25618 / H37Rv)).